Consider the following 198-residue polypeptide: Na(+)-translocating NADH-quinone reductase subunit E (198 aa).

6 consecutive transmembrane segments (helical) span residues 11-31 (SVFI…FLAV), 35-55 (VSTA…SVPV), 77-97 (FLNF…LEMI), 110-130 (GIFL…SFMV), 140-160 (IVYG…LAGI), and 176-196 (LGIT…FSGV).

The protein belongs to the NqrDE/RnfAE family. In terms of assembly, composed of six subunits; NqrA, NqrB, NqrC, NqrD, NqrE and NqrF.

Its subcellular location is the cell inner membrane. The catalysed reaction is a ubiquinone + n Na(+)(in) + NADH + H(+) = a ubiquinol + n Na(+)(out) + NAD(+). NQR complex catalyzes the reduction of ubiquinone-1 to ubiquinol by two successive reactions, coupled with the transport of Na(+) ions from the cytoplasm to the periplasm. NqrA to NqrE are probably involved in the second step, the conversion of ubisemiquinone to ubiquinol. The protein is Na(+)-translocating NADH-quinone reductase subunit E of Histophilus somni (strain 2336) (Haemophilus somnus).